Consider the following 315-residue polypeptide: Probable serine acetyltransferase 4 (315 aa).

The segment at 287-315 (AKPIIGKKAAPQRRPEELPGVTMEQRWSD) is disordered.

The protein belongs to the transferase hexapeptide repeat family. As to quaternary structure, homomultimer.

The enzyme catalyses L-serine + acetyl-CoA = O-acetyl-L-serine + CoA. The protein operates within amino-acid biosynthesis; L-cysteine biosynthesis; L-cysteine from L-serine: step 1/2. This Oryza sativa subsp. japonica (Rice) protein is Probable serine acetyltransferase 4 (SAT4).